The primary structure comprises 308 residues: Porphobilinogen deaminase (308 aa).

Residue cysteine 241 is modified to S-(dipyrrolylmethanemethyl)cysteine.

Belongs to the HMBS family. As to quaternary structure, monomer. Requires dipyrromethane as cofactor.

It catalyses the reaction 4 porphobilinogen + H2O = hydroxymethylbilane + 4 NH4(+). The protein operates within porphyrin-containing compound metabolism; protoporphyrin-IX biosynthesis; coproporphyrinogen-III from 5-aminolevulinate: step 2/4. In terms of biological role, tetrapolymerization of the monopyrrole PBG into the hydroxymethylbilane pre-uroporphyrinogen in several discrete steps. The protein is Porphobilinogen deaminase of Staphylococcus epidermidis (strain ATCC 35984 / DSM 28319 / BCRC 17069 / CCUG 31568 / BM 3577 / RP62A).